Reading from the N-terminus, the 70-residue chain is Large ribosomal subunit protein bL31 (70 aa).

Cysteine 16, cysteine 18, cysteine 38, and cysteine 41 together coordinate Zn(2+).

The protein belongs to the bacterial ribosomal protein bL31 family. Type A subfamily. In terms of assembly, part of the 50S ribosomal subunit. The cofactor is Zn(2+).

Binds the 23S rRNA. In Bifidobacterium adolescentis (strain ATCC 15703 / DSM 20083 / NCTC 11814 / E194a), this protein is Large ribosomal subunit protein bL31.